The following is an 891-amino-acid chain: Extended synaptotagmin-3 (891 aa).

The disordered stretch occupies residues 1–30 (MQPEEPCAPSAPGGPDVPERGQRSRDPGPR). At 1–32 (MQPEEPCAPSAPGGPDVPERGQRSRDPGPRLS) the chain is on the cytoplasmic side. Over residues 17 to 28 (VPERGQRSRDPG) the composition is skewed to basic and acidic residues. Residues 33–53 (GQLLPELYSFVARVLFYLAPV) traverse the membrane as a helical segment. Y54 is a topological domain (lumenal). Residues 55-75 (LAGYLGLSVTWLLLGALLWMW) traverse the membrane as a helical segment. Residues 76–891 (WRRNRRGKLG…ELTADGQPRS (816 aa)) lie on the Cytoplasmic side of the membrane. In terms of domain architecture, SMP-LTD spans 118 to 295 (DVERVEWANK…LPNRVTVPVK (178 aa)). C2 domains follow at residues 292–412 (VPVK…DEWF) and 430–570 (SLLT…QLDH). Positions 325, 326, 336, 383, 384, 385, 387, 389, and 390 each coordinate Ca(2+). The disordered stretch occupies residues 652-711 (SAATTDPEPMPEPQGPGPEPKGKDSARGLCESPGKKKNPATTFLTVPGLHSPGPIKSPRP). Positions 659 to 670 (EPMPEPQGPGPE) are enriched in pro residues. Positions 759 to 881 (RLGEIQLTVR…DLIKGFSQWY (123 aa)) constitute a C2 3 domain. The tract at residues 806–813 (RRWASRKK) is required for phosphatidylinositol 4,5-bisphosphate-dependent location at the cell membrane.

This sequence belongs to the extended synaptotagmin family.

The protein resides in the cell membrane. It localises to the endoplasmic reticulum membrane. Functionally, tethers the endoplasmic reticulum to the cell membrane and promotes the formation of appositions between the endoplasmic reticulum and the cell membrane. Binds glycerophospholipids in a barrel-like domain and may play a role in cellular lipid transport. The chain is Extended synaptotagmin-3 (Esyt3) from Mus musculus (Mouse).